A 168-amino-acid chain; its full sequence is ATP synthase subunit b (168 aa).

The helical transmembrane segment at 13–33 (WTFLFQTLNLLVVMGLLYVFL) threads the bilayer.

This sequence belongs to the ATPase B chain family. As to quaternary structure, F-type ATPases have 2 components, F(1) - the catalytic core - and F(0) - the membrane proton channel. F(1) has five subunits: alpha(3), beta(3), gamma(1), delta(1), epsilon(1). F(0) has three main subunits: a(1), b(2) and c(10-14). The alpha and beta chains form an alternating ring which encloses part of the gamma chain. F(1) is attached to F(0) by a central stalk formed by the gamma and epsilon chains, while a peripheral stalk is formed by the delta and b chains.

The protein resides in the cell membrane. Functionally, f(1)F(0) ATP synthase produces ATP from ADP in the presence of a proton or sodium gradient. F-type ATPases consist of two structural domains, F(1) containing the extramembraneous catalytic core and F(0) containing the membrane proton channel, linked together by a central stalk and a peripheral stalk. During catalysis, ATP synthesis in the catalytic domain of F(1) is coupled via a rotary mechanism of the central stalk subunits to proton translocation. In terms of biological role, component of the F(0) channel, it forms part of the peripheral stalk, linking F(1) to F(0). This Moorella thermoacetica (strain ATCC 39073 / JCM 9320) protein is ATP synthase subunit b.